The chain runs to 405 residues: Deoxyguanosinetriphosphate triphosphohydrolase-like protein (405 aa).

The 145-residue stretch at 75 to 219 (RLTHTIEVAQ…AAIADDIAYN (145 aa)) folds into the HD domain.

This sequence belongs to the dGTPase family. Type 2 subfamily.

The polypeptide is Deoxyguanosinetriphosphate triphosphohydrolase-like protein (Rhizobium etli (strain ATCC 51251 / DSM 11541 / JCM 21823 / NBRC 15573 / CFN 42)).